The following is a 335-amino-acid chain: Phosphate acyltransferase (335 aa).

Belongs to the PlsX family. In terms of assembly, homodimer. Probably interacts with PlsY.

The protein resides in the cytoplasm. It carries out the reaction a fatty acyl-[ACP] + phosphate = an acyl phosphate + holo-[ACP]. It participates in lipid metabolism; phospholipid metabolism. Its function is as follows. Catalyzes the reversible formation of acyl-phosphate (acyl-PO(4)) from acyl-[acyl-carrier-protein] (acyl-ACP). This enzyme utilizes acyl-ACP as fatty acyl donor, but not acyl-CoA. The chain is Phosphate acyltransferase from Streptococcus equi subsp. zooepidemicus (strain MGCS10565).